The primary structure comprises 122 residues: Putative TLX1 neighbor protein (122 aa).

The disordered stretch occupies residues 21-122 (SLLSQEAMGP…LGGGRGQRGQ (102 aa)). Over residues 113-122 (LGGGRGQRGQ) the composition is skewed to gly residues.

The chain is Putative TLX1 neighbor protein (TLX1NB) from Homo sapiens (Human).